The chain runs to 432 residues: Gamma-glutamyl phosphate reductase (432 aa).

This sequence belongs to the gamma-glutamyl phosphate reductase family.

The protein localises to the cytoplasm. The catalysed reaction is L-glutamate 5-semialdehyde + phosphate + NADP(+) = L-glutamyl 5-phosphate + NADPH + H(+). Its pathway is amino-acid biosynthesis; L-proline biosynthesis; L-glutamate 5-semialdehyde from L-glutamate: step 2/2. Catalyzes the NADPH-dependent reduction of L-glutamate 5-phosphate into L-glutamate 5-semialdehyde and phosphate. The product spontaneously undergoes cyclization to form 1-pyrroline-5-carboxylate. The polypeptide is Gamma-glutamyl phosphate reductase (Corynebacterium glutamicum (strain R)).